The chain runs to 125 residues: Small ribosomal subunit protein uS13 (125 aa).

It belongs to the universal ribosomal protein uS13 family. As to quaternary structure, part of the 30S ribosomal subunit. Forms a loose heterodimer with protein S19. Forms two bridges to the 50S subunit in the 70S ribosome.

In terms of biological role, located at the top of the head of the 30S subunit, it contacts several helices of the 16S rRNA. In the 70S ribosome it contacts the 23S rRNA (bridge B1a) and protein L5 of the 50S subunit (bridge B1b), connecting the 2 subunits; these bridges are implicated in subunit movement. Contacts the tRNAs in the A and P-sites. The protein is Small ribosomal subunit protein uS13 of Rickettsia typhi (strain ATCC VR-144 / Wilmington).